A 326-amino-acid chain; its full sequence is MKFTSVLAFFLATLTASATPLYKRQNVTSGGGTVPVIITGGPAVSGSQSNVTTTTLFNSTSTLNITQLYQIATQVNQTLQSESSSGIIIVTNWRSIETLSFFCSIVFNTSKTIVITENFLWGVPILSSSDAEGRGTLVAGRDKVVYSGVFPPYTVPVGVLSGQKNVQWFFDACEPTLIASNSTIRTQYSNFTSAQISSNASSGTNTSSSSSSPLVPIIYEEGYSQSLIQSLSSSIQGLVVVSSGTSHNSTVASWTSVDFPVVYASDGSSGHDGSGIGFISNTSIPQGAISAGYLSPIQAQTLLSIAIHNQVTSSSELQQIFPVSQQ.

A signal peptide spans 1 to 18; the sequence is MKFTSVLAFFLATLTASA. In terms of domain architecture, Asparaginase/glutaminase spans 19 to 324; that stretch reads TPLYKRQNVT…SELQQIFPVS (306 aa). Residues Asn26, Asn50, Asn58, Asn64, Asn76, Asn108, Asn181, Asn190, Asn199, Asn205, Asn248, and Asn281 are each glycosylated (N-linked (GlcNAc...) asparagine).

To yeast YGP1.

In terms of biological role, serves a protective function during the early stages of spore wall formation, and contributes to spore wall maturation. The sequence is that of Sporulation-specific wall maturation protein (SPS100) from Saccharomyces cerevisiae (strain ATCC 204508 / S288c) (Baker's yeast).